Reading from the N-terminus, the 20-residue chain is DEQSGISQTVIVGPWGAKVS.

This sequence belongs to the jacalin lectin family. Tetramer of four alpha chains associated with two or four beta chains.

In terms of biological role, D-galactose-specific lectin, binds the T-antigen structure Gal-beta1,3-GalNAc (Thomsen-Friedenreich-antigen-specific lectin). Potent and selective stimulant of distinct T- and B-cell functions. Shows a unique ability to specifically recognize IgA-1 from human serum. In Artocarpus integer (Jack fruit), this protein is Agglutinin beta-3 chain.